We begin with the raw amino-acid sequence, 262 residues long: Lysosomal-associated transmembrane protein 5 (262 aa).

5 helical membrane-spanning segments follow: residues 19-39, 64-84, 92-112, 134-154, and 184-204; these read IATT…FIEH, ISSF…LIGV, LLPF…TLLG, FPLM…LCSS, and FIKM…FKVY. Position 259 is a phosphotyrosine (Y259).

This sequence belongs to the LAPTM4/LAPTM5 transporter family. Binds to ubiquitin. As to expression, preferentially expressed in adult hematopoietic tissues. High levels in lymphoid and myeloid tissues. Highly expressed in peripheral blood leukocytes, thymus, spleen and lung, followed by placenta, liver and kidney.

The protein localises to the lysosome membrane. In terms of biological role, may have a special functional role during embryogenesis and in adult hematopoietic cells. In Homo sapiens (Human), this protein is Lysosomal-associated transmembrane protein 5 (LAPTM5).